Here is a 145-residue protein sequence, read N- to C-terminus: Small ribosomal subunit protein bS16 (145 aa).

Residues 82 to 145 form a disordered region; that stretch reads IKERAATNNP…EAAAEEQTEA (64 aa). Residues 95 to 115 show a composition bias toward basic and acidic residues; it reads EPGKKAKERAEERAEKAREAA. A compositionally biased stretch (low complexity) spans 116 to 137; it reads EAAAAAAAAPAEEAAAEAPAEA.

The protein belongs to the bacterial ribosomal protein bS16 family.

In Novosphingobium aromaticivorans (strain ATCC 700278 / DSM 12444 / CCUG 56034 / CIP 105152 / NBRC 16084 / F199), this protein is Small ribosomal subunit protein bS16.